We begin with the raw amino-acid sequence, 311 residues long: Dermonecrotic toxin (311 aa).

The N-terminal stretch at 1-21 (MYVHLALILGCWTVVLQGAET) is a signal peptide. Residues 22-26 (DVGER) constitute a propeptide that is removed on maturation. His38 is a catalytic residue. Residues Glu58 and Asp60 each contribute to the Mg(2+) site. The Nucleophile role is filled by His73. Cys77 and Cys83 are oxidised to a cystine. Mg(2+) is bound at residue Asp117.

Belongs to the arthropod phospholipase D family. Class I subfamily. Mg(2+) is required as a cofactor. Expressed by the venom gland.

Its subcellular location is the secreted. The enzyme catalyses an N-(acyl)-sphingosylphosphocholine = an N-(acyl)-sphingosyl-1,3-cyclic phosphate + choline. It carries out the reaction an N-(acyl)-sphingosylphosphoethanolamine = an N-(acyl)-sphingosyl-1,3-cyclic phosphate + ethanolamine. It catalyses the reaction a 1-acyl-sn-glycero-3-phosphocholine = a 1-acyl-sn-glycero-2,3-cyclic phosphate + choline. The catalysed reaction is a 1-acyl-sn-glycero-3-phosphoethanolamine = a 1-acyl-sn-glycero-2,3-cyclic phosphate + ethanolamine. Catalytic activity and hemolysis are inhibited by divalent ion chelators (1,10-phenanthroline, EDTA, and EGTA). Functionally, dermonecrotic toxins cleave the phosphodiester linkage between the phosphate and headgroup of certain phospholipids (sphingolipid and lysolipid substrates), forming an alcohol (often choline) and a cyclic phosphate. This toxin acts on sphingomyelin (SM). It may also act on ceramide phosphoethanolamine (CPE), lysophosphatidylcholine (LPC) and lysophosphatidylethanolamine (LPE), but not on lysophosphatidylserine (LPS), and lysophosphatidylglycerol (LPG). It acts by transphosphatidylation, releasing exclusively cyclic phosphate products as second products. Shows complement-dependent hemolysis. Also induces dermonecrosis, vascular permeability, edema, inflammatory response, and platelet aggregation. This is Dermonecrotic toxin from Loxosceles laeta (South American recluse spider).